The following is a 1181-amino-acid chain: HEAT repeat-containing protein 6 (1181 aa).

Residues 159–198 (PELLGNTGLLMKLSDLAQSDPEVRRAAVHCMANLCLSVPG) form an HEAT 1 repeat. 2 disordered regions span residues 292–347 (QYDG…PVTG) and 371–390 (LDGS…SSSS). Positions 300 to 312 (KPQQSESSASRPT) are enriched in polar residues. The span at 313-325 (LNKKKKSKVKPKK) shows a compositional bias: basic residues. Phosphoserine is present on residues serine 336 and serine 337. 2 positions are modified to phosphoserine: serine 399 and serine 402. HEAT repeat units lie at residues 452 to 490 (ELGS…GSKQ), 515 to 552 (SIRE…NAPY), and 558 to 595 (SLLT…THAP). Positions 613–646 (NSNSATPHLSPPDWWKKAPAGPSLEETSVSSPKG) are disordered. The residue at position 618 (threonine 618) is a Phosphothreonine. Positions 637-646 (EETSVSSPKG) are enriched in polar residues. At serine 643 the chain carries Phosphoserine.

Amplified in breast cancer cell lines MCF-7 and BT-474.

Functionally, amplification-dependent oncogene. This Homo sapiens (Human) protein is HEAT repeat-containing protein 6 (HEATR6).